A 212-amino-acid chain; its full sequence is ATP-dependent dethiobiotin synthetase BioD (212 aa).

Gly13–Val18 is a binding site for ATP. Thr17 is a Mg(2+) binding site. Residue Lys33 is part of the active site. Substrate is bound at residue Ser37. Residue Glu100 coordinates Mg(2+). ATP-binding positions include Glu100–Gly103 and Pro184–Leu186.

This sequence belongs to the dethiobiotin synthetase family. Homodimer. Requires Mg(2+) as cofactor.

Its subcellular location is the cytoplasm. The catalysed reaction is (7R,8S)-7,8-diammoniononanoate + CO2 + ATP = (4R,5S)-dethiobiotin + ADP + phosphate + 3 H(+). It participates in cofactor biosynthesis; biotin biosynthesis; biotin from 7,8-diaminononanoate: step 1/2. In terms of biological role, catalyzes a mechanistically unusual reaction, the ATP-dependent insertion of CO2 between the N7 and N8 nitrogen atoms of 7,8-diaminopelargonic acid (DAPA, also called 7,8-diammoniononanoate) to form a ureido ring. This chain is ATP-dependent dethiobiotin synthetase BioD, found in Brucella canis (strain ATCC 23365 / NCTC 10854 / RM-666).